The primary structure comprises 146 residues: Ribonuclease H (146 aa).

The region spanning 4 to 145 is the RNase H type-1 domain; sequence ELNKVVIYTD…ADMLARSQIV (142 aa). Positions 13, 51, 73, and 137 each coordinate Mg(2+).

It belongs to the RNase H family. As to quaternary structure, monomer. It depends on Mg(2+) as a cofactor.

Its subcellular location is the cytoplasm. The enzyme catalyses Endonucleolytic cleavage to 5'-phosphomonoester.. Endonuclease that specifically degrades the RNA of RNA-DNA hybrids. This chain is Ribonuclease H, found in Ehrlichia chaffeensis (strain ATCC CRL-10679 / Arkansas).